A 148-amino-acid chain; its full sequence is Probable histone H2B.1 (148 aa).

Positions 1–32 (MAPKGEKKPAEKKPAEEKKSTVAEKAPAEKKP) are enriched in basic and acidic residues. The segment at 1 to 57 (MAPKGEKKPAEKKPAEEKKSTVAEKAPAEKKPKAGKKLPKEGGSAAGEKKKKRSKKS) is disordered. Lys-7, Lys-36, and Lys-37 each carry N6-acetyllysine. A Glycyl lysine isopeptide (Lys-Gly) (interchain with G-Cter in ubiquitin) cross-link involves residue Lys-144.

It belongs to the histone H2B family. In terms of assembly, the nucleosome is a histone octamer containing two molecules each of H2A, H2B, H3 and H4 assembled in one H3-H4 heterotetramer and two H2A-H2B heterodimers. The octamer wraps approximately 147 bp of DNA. Can be acetylated to form H2BK6ac, H2BK33ac and H2BK34ac. In terms of processing, monoubiquitinated to form H2BK143ub1; may give a specific tag for epigenetic transcriptional activation.

The protein resides in the nucleus. It is found in the chromosome. Its function is as follows. Core component of nucleosome. Nucleosomes wrap and compact DNA into chromatin, limiting DNA accessibility to the cellular machineries which require DNA as a template. Histones thereby play a central role in transcription regulation, DNA repair, DNA replication and chromosomal stability. DNA accessibility is regulated via a complex set of post-translational modifications of histones, also called histone code, and nucleosome remodeling. The chain is Probable histone H2B.1 from Medicago truncatula (Barrel medic).